The primary structure comprises 362 residues: Terpene synthase 3 (362 aa).

The DDxx(x)D/E motif motif lies at 90-95 (DDFLER). An NDxxSxxxD/E motif motif is present at residues 239-247 (NDCVSYAKE).

It belongs to the terpene synthase family.

It carries out the reaction (2E,6E)-farnesyl diphosphate = beta-maaliene + diphosphate. It catalyses the reaction (2E,6E)-farnesyl diphosphate = aristolene + diphosphate. The catalysed reaction is (2E,6E)-farnesyl diphosphate = calarene + diphosphate. The enzyme catalyses (2E)-geranyl diphosphate = (E)-beta-ocimene + diphosphate. It carries out the reaction (2E)-geranyl diphosphate = (Z)-beta-ocimene + diphosphate. It catalyses the reaction (2E)-geranyl diphosphate + H2O = linalool + diphosphate. The catalysed reaction is (2E)-geranyl diphosphate = beta-myrcene + diphosphate. In terms of biological role, terpene synthase that converts its substrate farnesyl diphosphate (FPP) into an unidentified sesquiterpene as a major product, as well as beta-maaliene, aristolene, calarene and 2 additional unidentified sesquiterpene as minor products. Is also able to convert geranyl diphosphate (GPP) into a mixture of monoterpenes including (Z)-beta-ocimene, (E)-beta-ocimene, allo-ocimene, linalool and beta-myrcene. In Dictyostelium discoideum (Social amoeba), this protein is Terpene synthase 3.